The following is a 193-amino-acid chain: Inosine triphosphate pyrophosphatase (193 aa).

10–15 (TGNANK) is an ITP binding site. Residue Glu42 participates in Mg(2+) binding. ITP contacts are provided by residues Lys54, 70–71 (DT), Lys87, 146–149 (FGWD), Lys169, and 174–175 (HR).

It belongs to the HAM1 NTPase family. Homodimer. Mg(2+) serves as cofactor. Requires Mn(2+) as cofactor.

Its subcellular location is the cytoplasm. It localises to the nucleus. It carries out the reaction ITP + H2O = IMP + diphosphate + H(+). The catalysed reaction is dITP + H2O = dIMP + diphosphate + H(+). The enzyme catalyses XTP + H2O = XMP + diphosphate + H(+). In terms of biological role, pyrophosphatase that hydrolyzes non-canonical purine nucleotides such as inosine triphosphate (ITP), deoxyinosine triphosphate (dITP) or xanthosine 5'-triphosphate (XTP) to their respective monophosphate derivatives. The enzyme does not distinguish between the deoxy- and ribose forms. Probably excludes non-canonical purines from RNA and DNA precursor pools, thus preventing their incorporation into RNA and DNA and avoiding chromosomal lesions. The sequence is that of Inosine triphosphate pyrophosphatase from Mycosarcoma maydis (Corn smut fungus).